The primary structure comprises 446 residues: Probable glucuronosyltransferase Os04g0650300 (446 aa).

The Cytoplasmic segment spans residues 1–30 (MKLPLLRPLWPMLSPAAGSPDSPPEPSKPS). The helical; Signal-anchor for type II membrane protein transmembrane segment at 31–51 (LPAAWLLLHALFCATSMAVGF) threads the bilayer. Topologically, residues 52–446 (RFSRLIVYLL…TTLLNTEGQH (395 aa)) are lumenal. The N-linked (GlcNAc...) asparagine glycan is linked to Asn87. A disordered region spans residues 425–446 (QQDAKPETPLKRTTLLNTEGQH).

It belongs to the glycosyltransferase 43 family.

It localises to the golgi apparatus membrane. Functionally, involved in the synthesis of glucuronoxylan hemicellulose in secondary cell walls. This chain is Probable glucuronosyltransferase Os04g0650300, found in Oryza sativa subsp. japonica (Rice).